We begin with the raw amino-acid sequence, 269 residues long: NAD kinase (269 aa).

Aspartate 45 functions as the Proton acceptor in the catalytic mechanism. Residues 45-46 (DG), 122-123 (NE), arginine 149, aspartate 151, and alanine 186 each bind NAD(+).

This sequence belongs to the NAD kinase family. It depends on a divalent metal cation as a cofactor.

It localises to the cytoplasm. The enzyme catalyses NAD(+) + ATP = ADP + NADP(+) + H(+). In terms of biological role, involved in the regulation of the intracellular balance of NAD and NADP, and is a key enzyme in the biosynthesis of NADP. Catalyzes specifically the phosphorylation on 2'-hydroxyl of the adenosine moiety of NAD to yield NADP. This chain is NAD kinase, found in Staphylococcus carnosus (strain TM300).